The following is a 237-amino-acid chain: MSQLNVDLQEIAKFEALAAKWWDQHSEFRPLHQINPLRLNWIDERAGGLAGKKVLDVGCGGGILAESMARRGADVLGIDMGEAPLAIGRLHAQQENVQNIEYRQIPVEELAQEQAGQYDVVTCMEMMEHVPDPASIVKACQTLVKPGGHVFFSTINRNPKSYLFAIIGAEYVLRMLPKGTHDYHKFIRPSEMAHDIRNAGLTLKEMTGLHYNPITKRYWLAPNVDVNYMVHTIKTGV.

The S-adenosyl-L-methionine site is built by Arg-38, Gly-58, Asp-79, and Met-124.

It belongs to the methyltransferase superfamily. UbiG/COQ3 family.

It carries out the reaction a 3-demethylubiquinol + S-adenosyl-L-methionine = a ubiquinol + S-adenosyl-L-homocysteine + H(+). The catalysed reaction is a 3-(all-trans-polyprenyl)benzene-1,2-diol + S-adenosyl-L-methionine = a 2-methoxy-6-(all-trans-polyprenyl)phenol + S-adenosyl-L-homocysteine + H(+). The protein operates within cofactor biosynthesis; ubiquinone biosynthesis. Its function is as follows. O-methyltransferase that catalyzes the 2 O-methylation steps in the ubiquinone biosynthetic pathway. This is Ubiquinone biosynthesis O-methyltransferase from Acinetobacter baumannii (strain ACICU).